A 179-amino-acid polypeptide reads, in one-letter code: Large ribosomal subunit protein uL6 (179 aa).

Belongs to the universal ribosomal protein uL6 family. In terms of assembly, part of the 50S ribosomal subunit.

In terms of biological role, this protein binds to the 23S rRNA, and is important in its secondary structure. It is located near the subunit interface in the base of the L7/L12 stalk, and near the tRNA binding site of the peptidyltransferase center. The sequence is that of Large ribosomal subunit protein uL6 from Leptospira borgpetersenii serovar Hardjo-bovis (strain JB197).